We begin with the raw amino-acid sequence, 136 residues long: Large ribosomal subunit protein eL27 (136 aa).

The KOW domain occupies 5 to 40 (MKPGKVVLVLAGRYSGRKAVIVKNIDDGTSDRPYSH). An N6-acetyllysine mark is found at lysine 27 and lysine 93.

This sequence belongs to the eukaryotic ribosomal protein eL27 family. In terms of assembly, component of the large ribosomal subunit. Interacts with RRP1B. Component of the large ribosomal subunit. Interacts with RRP1B. Interacts with DHX33.

The protein resides in the cytoplasm. It is found in the cytosol. Its subcellular location is the rough endoplasmic reticulum. Component of the large ribosomal subunit. Required for proper rRNA processing and maturation of 28S and 5.8S rRNAs. The chain is Large ribosomal subunit protein eL27 (RPL27) from Canis lupus familiaris (Dog).